The primary structure comprises 366 residues: 2-aminoethylphosphonate--pyruvate transaminase (366 aa).

An N6-(pyridoxal phosphate)lysine modification is found at K194.

Belongs to the class-V pyridoxal-phosphate-dependent aminotransferase family. PhnW subfamily. In terms of assembly, homodimer. The cofactor is pyridoxal 5'-phosphate.

The enzyme catalyses (2-aminoethyl)phosphonate + pyruvate = phosphonoacetaldehyde + L-alanine. Functionally, involved in phosphonate degradation. This Lactiplantibacillus plantarum (strain ATCC BAA-793 / NCIMB 8826 / WCFS1) (Lactobacillus plantarum) protein is 2-aminoethylphosphonate--pyruvate transaminase.